The sequence spans 554 residues: DNA mismatch repair protein MutL (554 aa).

This sequence belongs to the DNA mismatch repair MutL/HexB family.

This protein is involved in the repair of mismatches in DNA. It is required for dam-dependent methyl-directed DNA mismatch repair. May act as a 'molecular matchmaker', a protein that promotes the formation of a stable complex between two or more DNA-binding proteins in an ATP-dependent manner without itself being part of a final effector complex. This is DNA mismatch repair protein MutL from Crocosphaera subtropica (strain ATCC 51142 / BH68) (Cyanothece sp. (strain ATCC 51142)).